Here is a 369-residue protein sequence, read N- to C-terminus: Ubiquinone biosynthesis protein COQ4, mitochondrial (369 aa).

Residues 1 to 28 (MTSILGSARPLIQVGPKSRNASTSMSRL) constitute a mitochondrion transit peptide. The interval 1–70 (MTSILGSARP…NPTNASRHPR (70 aa)) is disordered. Composition is skewed to polar residues over residues 19 to 33 (RNASTSMSRLPSFPT) and 47 to 66 (YATISPTAPRSSQRNPTNAS). Zn(2+) contacts are provided by histidine 198, aspartate 199, histidine 202, and glutamate 214. The interval 330–369 (FSGRAKKGGKRRGWPSKILEHQKAQHQQQQQQQKVDESRN) is disordered. The segment covering 332 to 343 (GRAKKGGKRRGW) has biased composition (basic residues).

It belongs to the COQ4 family. As to quaternary structure, component of a multi-subunit COQ enzyme complex, composed of at least COQ3, COQ4, COQ5, COQ6, COQ7 and COQ9. It depends on Zn(2+) as a cofactor.

It localises to the mitochondrion inner membrane. The catalysed reaction is a 4-hydroxy-3-methoxy-5-(all-trans-polyprenyl)benzoate + H(+) = a 2-methoxy-6-(all-trans-polyprenyl)phenol + CO2. It functions in the pathway cofactor biosynthesis; ubiquinone biosynthesis. Its function is as follows. Lyase that catalyzes the C1-decarboxylation of 4-hydroxy-3-methoxy-5-(all-trans-polyprenyl)benzoic acid into 2-methoxy-6-(all-trans-polyprenyl)phenol during ubiquinone biosynthesis. The sequence is that of Ubiquinone biosynthesis protein COQ4, mitochondrial from Mycosarcoma maydis (Corn smut fungus).